Consider the following 420-residue polypeptide: Serine palmitoyltransferase (420 aa).

Residues 134-135, H234, T262, and S264 contribute to the pyridoxal 5'-phosphate site; that span reads GY. An N6-(pyridoxal phosphate)lysine modification is found at K265.

This sequence belongs to the class-II pyridoxal-phosphate-dependent aminotransferase family. As to quaternary structure, homodimer. Pyridoxal 5'-phosphate serves as cofactor.

The protein localises to the cytoplasm. The enzyme catalyses L-serine + hexadecanoyl-CoA + H(+) = 3-oxosphinganine + CO2 + CoA. The protein operates within lipid metabolism; sphingolipid metabolism. With respect to regulation, not inhibited by relatively high concentrations of palmitoyl-CoA. Inhibited by both D-cycloserine (DCS) and L-cycloserine (LCS), which inactivate SPT by transamination to form a free pyridoxamine 5'-phosphate (PMP) and beta-aminooxyacetaldehyde that remain bound at the active site. Inhibition is reversed by incubation with excess pyridoxal phosphate. Inhibited by the fungal natural product myriocin, which acts as a competitive inhibitor for both L-serine and palmitoyl-CoA substrates. Catalyzes the condensation of L-serine with palmitoyl-CoA (hexadecanoyl-CoA) to produce 3-oxosphinganine. Exhibits a broad substrate specificity concerning the chain length and the degree of unsaturation of acyl-CoA. The protein is Serine palmitoyltransferase of Sphingomonas paucimobilis (Pseudomonas paucimobilis).